Here is a 316-residue protein sequence, read N- to C-terminus: RING finger protein 148 (316 aa).

Positions 1 to 12 (MLLCVSCLSVNG) are cleaved as a signal peptide. N56 carries N-linked (GlcNAc...) asparagine glycosylation. Residues 84–178 (VSGAVVLPEG…GNLKGMELLH (95 aa)) form the PA domain. Transmembrane regions (helical) follow at residues 173-193 (GMEL…IEVG) and 204-224 (VMSL…YCAW). The RING-type; atypical zinc-finger motif lies at 269 to 310 (CVVCFDMYKAQDVIRILTCKHFFHKTCIDPWLLAHRTCPMCK).

It is found in the membrane. The chain is RING finger protein 148 (Rnf148) from Mus musculus (Mouse).